The following is a 313-amino-acid chain: Small ribosomal subunit protein uS2 (313 aa).

Residues 233 to 256 (RTMTDKQSDVAKEAKADGKEEAPK) are compositionally biased toward basic and acidic residues. Positions 233–293 (RTMTDKQSDV…SRKLVAAGTA (61 aa)) are disordered.

Belongs to the universal ribosomal protein uS2 family.

This is Small ribosomal subunit protein uS2 from Bdellovibrio bacteriovorus (strain ATCC 15356 / DSM 50701 / NCIMB 9529 / HD100).